We begin with the raw amino-acid sequence, 150 residues long: MRVVIQRVSHASVTIDGHCKSAIQKGMMILVGIEETDSWEDIDWLCKKIVNLRIFDDENGVMNKSILEDEGNILVISQFTLHASTKKGNRPSYIKAAKPEISIPLYEQFCNDLSCALGKEVKTGEFGADMKVELLNDGPVTICIDTKNKE.

The Gly-cisPro motif, important for rejection of L-amino acids motif lies at 138-139 (GP).

This sequence belongs to the DTD family. As to quaternary structure, homodimer.

Its subcellular location is the cytoplasm. It catalyses the reaction glycyl-tRNA(Ala) + H2O = tRNA(Ala) + glycine + H(+). It carries out the reaction a D-aminoacyl-tRNA + H2O = a tRNA + a D-alpha-amino acid + H(+). In terms of biological role, an aminoacyl-tRNA editing enzyme that deacylates mischarged D-aminoacyl-tRNAs. Also deacylates mischarged glycyl-tRNA(Ala), protecting cells against glycine mischarging by AlaRS. Acts via tRNA-based rather than protein-based catalysis; rejects L-amino acids rather than detecting D-amino acids in the active site. By recycling D-aminoacyl-tRNA to D-amino acids and free tRNA molecules, this enzyme counteracts the toxicity associated with the formation of D-aminoacyl-tRNA entities in vivo and helps enforce protein L-homochirality. The polypeptide is D-aminoacyl-tRNA deacylase (Bacteroides fragilis (strain ATCC 25285 / DSM 2151 / CCUG 4856 / JCM 11019 / LMG 10263 / NCTC 9343 / Onslow / VPI 2553 / EN-2)).